A 489-amino-acid chain; its full sequence is 3-octaprenyl-4-hydroxybenzoate carboxy-lyase (489 aa).

Asn172 is a binding site for Mn(2+). Residues 175-177 (IYR), 189-191 (RWL), and 194-195 (RG) contribute to the prenylated FMN site. Residue Glu238 participates in Mn(2+) binding. Catalysis depends on Asp287, which acts as the Proton donor.

Belongs to the UbiD family. As to quaternary structure, homohexamer. Requires prenylated FMN as cofactor. The cofactor is Mn(2+).

Its subcellular location is the cell membrane. It catalyses the reaction a 4-hydroxy-3-(all-trans-polyprenyl)benzoate + H(+) = a 2-(all-trans-polyprenyl)phenol + CO2. It functions in the pathway cofactor biosynthesis; ubiquinone biosynthesis. In terms of biological role, catalyzes the decarboxylation of 3-octaprenyl-4-hydroxy benzoate to 2-octaprenylphenol, an intermediate step in ubiquinone biosynthesis. The chain is 3-octaprenyl-4-hydroxybenzoate carboxy-lyase from Salmonella paratyphi B (strain ATCC BAA-1250 / SPB7).